The following is a 62-amino-acid chain: MSIIFQLALIALVLFSFVMVIGVPVAYASPQNWNQSKPLLYLGSAIWAILVVIVAILNFFVI.

2 helical membrane passes run 8–28 and 41–61; these read ALIA…VAYA and YLGS…NFFV.

This sequence belongs to the PsbZ family. In terms of assembly, PSII is composed of 1 copy each of membrane proteins PsbA, PsbB, PsbC, PsbD, PsbE, PsbF, PsbH, PsbI, PsbJ, PsbK, PsbL, PsbM, PsbT, PsbX, PsbY, PsbZ, Psb30/Ycf12, peripheral proteins PsbO, CyanoQ (PsbQ), PsbU, PsbV and a large number of cofactors. It forms dimeric complexes.

The protein resides in the cellular thylakoid membrane. In terms of biological role, may control the interaction of photosystem II (PSII) cores with the light-harvesting antenna, regulates electron flow through the 2 photosystem reaction centers. PSII is a light-driven water plastoquinone oxidoreductase, using light energy to abstract electrons from H(2)O, generating a proton gradient subsequently used for ATP formation. The sequence is that of Photosystem II reaction center protein Z from Rippkaea orientalis (strain PCC 8801 / RF-1) (Cyanothece sp. (strain PCC 8801)).